Reading from the N-terminus, the 380-residue chain is Guanine nucleotide-binding protein subunit beta (380 aa).

WD repeat units follow at residues 64-94, 106-136, 155-186, 203-234, 247-277, 296-326, and 342-372; these read GHSGKVYSLDWTPEKNWIVSASQDGRLIVWN, LHCPWVMTCAFAPNGQSVACGGLDSACSIFN, GHKGYVSSCQYVPDQETRLITSSGDQTCVLWD, GHTADVLSLSINSSNSNMFVSGSCDATVRLWD, GHEGDINSVKFFPDGQRFGTGSDDGTCRLFD, NELPTVTSIAFSISGRLLFAGYSNGDCYVWD, and SHEGRISCLGLSSDGSALCTGSWDKNLKIWA.

The protein belongs to the WD repeat G protein beta family. In terms of assembly, g proteins are composed of 3 units, alpha, beta and gamma. Interacts with the gamma subunits RGG1 and RGG2.

The protein localises to the cell membrane. Guanine nucleotide-binding proteins (G proteins) are involved as modulators or transducers in various transmembrane signaling systems. The beta and gamma chains are required for the GTPase activity, for replacement of GDP by GTP, and for G protein-effector interaction. This chain is Guanine nucleotide-binding protein subunit beta, found in Oryza sativa subsp. japonica (Rice).